The chain runs to 142 residues: Organic hydroperoxide resistance protein-like 2 (142 aa).

This sequence belongs to the OsmC/Ohr family.

The polypeptide is Organic hydroperoxide resistance protein-like 2 (Staphylococcus epidermidis (strain ATCC 12228 / FDA PCI 1200)).